The sequence spans 66 residues: Large ribosomal subunit protein bL35 (66 aa).

It belongs to the bacterial ribosomal protein bL35 family.

The polypeptide is Large ribosomal subunit protein bL35 (Thermodesulfovibrio yellowstonii (strain ATCC 51303 / DSM 11347 / YP87)).